A 209-amino-acid polypeptide reads, in one-letter code: Large ribosomal subunit protein uL3 (209 aa).

The tract at residues 124–156 is disordered; that stretch reads KRHNFSGGQRTHGQSDRQRAPGSVGGSSDPSRV.

This sequence belongs to the universal ribosomal protein uL3 family. In terms of assembly, part of the 50S ribosomal subunit. Forms a cluster with proteins L14 and L19.

In terms of biological role, one of the primary rRNA binding proteins, it binds directly near the 3'-end of the 23S rRNA, where it nucleates assembly of the 50S subunit. The polypeptide is Large ribosomal subunit protein uL3 (Pelodictyon phaeoclathratiforme (strain DSM 5477 / BU-1)).